A 257-amino-acid polypeptide reads, in one-letter code: AN1-type zinc finger protein 2B (257 aa).

2 consecutive AN1-type zinc fingers follow at residues 4-52 (PDLG…QKDI) and 94-142 (KIFT…HPTS). Positions 10, 15, 25, 28, 33, 36, 42, 44, 100, 105, 115, 118, 123, 126, 132, and 134 each coordinate Zn(2+). The segment at 141–151 (TSRAGLAAISR) is VCP/p97-interacting motif (VIM). Positions 153-187 (QGLASTSTVPSPSRTLPSSSSPSRATPQLPPRTTS) are disordered. The span at 156 to 179 (ASTSTVPSPSRTLPSSSSPSRATP) shows a compositional bias: low complexity. Residues serine 163, serine 173, and serine 187 each carry the phosphoserine modification. UIM domains lie at 197–216 (SEDEALQRALELSLAEAKPQ) and 221–240 (QEEEDLALAQALSASEAEYQ). Cysteine 254 carries the cysteine methyl ester modification. Cysteine 254 carries S-geranylgeranyl cysteine lipidation. A CAAX motif motif is present at residues 254 to 257 (CSLC). Residues 255–257 (SLC) constitute a propeptide, removed in mature form.

Binds 'Lys-48'-linked polyubiquitin chains of ubiquitinated proteins. Associates with the proteasome complex; upon exposure to arsenite. Interacts (via VIM motif) with VCP; the interaction is direct. Interacts with BAG6. Interacts with IGF1R (nascent precursor form). Interacts with DERL1, FAF2, NPLOC4 and UFD1; probably through VCP. In terms of processing, phosphorylated by MAPK14. Phosphorylation has no effect on association with the proteasome complex.

The protein localises to the endoplasmic reticulum membrane. Functionally, plays a role in protein homeostasis by regulating both the translocation and the ubiquitin-mediated proteasomal degradation of nascent proteins at the endoplasmic reticulum. It is involved in the regulation of signal-mediated translocation of proteins into the endoplasmic reticulum. It also plays a role in the ubiquitin-mediated proteasomal degradation of proteins for which signal-mediated translocation to the endoplasmic reticulum has failed. May therefore function in the endoplasmic reticulum stress-induced pre-emptive quality control, a mechanism that selectively attenuates the translocation of newly synthesized proteins into the endoplasmic reticulum and reroutes them to the cytosol for proteasomal degradation. By controlling the steady-state expression of the IGF1R receptor, indirectly regulates the insulin-like growth factor receptor signaling pathway. The chain is AN1-type zinc finger protein 2B from Rattus norvegicus (Rat).